A 546-amino-acid polypeptide reads, in one-letter code: MNSNTKIIFVTGGVVSSLGKGVTAASLATLLESRGLNVTMMKLDPYINVDPGTMSPLQHGEVFVTEDGAETDLDLGHYERFIRNKMTQANNFTTGKVYQSVLRRERKGDYLGATIQVIPHITDEIKRRICSGIADDVDVAIVEIGGTVGDIESQPFLEAIRQLRIELGRNRTLFVHLTLLPYIKVAGEIKTKPTQHSVKELRGIGIQADVLVCRCEKKFDDSEKRKIALFTNVDQDCIFTAEDVDTIYEVPLKYNQQGFDAKLVELLNLNAKEADLSEWQNVVNTIRDVKGEVTIAMVGKYVSLTEAYKSLNEALYNAGYKKGVKVKIKFVDSEDVNENNVESYFKDVAAILVPGGFGSRGVEGKIISIKYARENQIPFLGICLGMQLAVIEYARNILGIKDAHSSELEPTTANPVIGLITEWQAEDGTVHQRTHSSDLGGTMRLGGYKCVLKQGSRAREIYQADEVVERHRHRYEVNSNYVERLEEAGLIFSGRSEDNKLMELIEIPQHKWFIACQAHPEFTSTPRYGHKLFESYIQAAIENSNN.

An amidoligase domain region spans residues methionine 1 to leucine 269. Serine 16 provides a ligand contact to CTP. Serine 16 serves as a coordination point for UTP. Residues serine 17–valine 22 and aspartate 74 contribute to the ATP site. Aspartate 74 and glutamate 143 together coordinate Mg(2+). CTP contacts are provided by residues aspartate 150 to glutamate 152, lysine 190 to glutamine 195, and lysine 226. Residues lysine 190–glutamine 195 and lysine 226 each bind UTP. The region spanning threonine 294–asparagine 546 is the Glutamine amidotransferase type-1 domain. Glycine 356 is a binding site for L-glutamine. The active-site Nucleophile; for glutamine hydrolysis is cysteine 383. Residues leucine 384 to glutamine 387, glutamate 407, and arginine 474 contribute to the L-glutamine site. Active-site residues include histidine 519 and glutamate 521.

The protein belongs to the CTP synthase family. Homotetramer.

The enzyme catalyses UTP + L-glutamine + ATP + H2O = CTP + L-glutamate + ADP + phosphate + 2 H(+). The catalysed reaction is L-glutamine + H2O = L-glutamate + NH4(+). It catalyses the reaction UTP + NH4(+) + ATP = CTP + ADP + phosphate + 2 H(+). It participates in pyrimidine metabolism; CTP biosynthesis via de novo pathway; CTP from UDP: step 2/2. With respect to regulation, allosterically activated by GTP, when glutamine is the substrate; GTP has no effect on the reaction when ammonia is the substrate. The allosteric effector GTP functions by stabilizing the protein conformation that binds the tetrahedral intermediate(s) formed during glutamine hydrolysis. Inhibited by the product CTP, via allosteric rather than competitive inhibition. Functionally, catalyzes the ATP-dependent amination of UTP to CTP with either L-glutamine or ammonia as the source of nitrogen. Regulates intracellular CTP levels through interactions with the four ribonucleotide triphosphates. In Francisella tularensis subsp. tularensis (strain FSC 198), this protein is CTP synthase.